We begin with the raw amino-acid sequence, 232 residues long: uncharacterized protein (232 aa).

A signal peptide spans 1 to 32 (MTTSKIATAFKTATFALAAGAVALGLASPADA).

This is an uncharacterized protein from Mycobacterium bovis (strain ATCC BAA-935 / AF2122/97).